Consider the following 304-residue polypeptide: Kazal-type serine protease inhibitor domain-containing protein 1 (304 aa).

The first 30 residues, 1 to 30 (MLPPPRPAAALALPVLLLLLVVLTPPPTGA), serve as a signal peptide directing secretion. An IGFBP N-terminal domain is found at 49-129 (EGEGCAPCRP…EVPEPLCACR (81 aa)). 7 disulfides stabilise this stretch: Cys53-Cys76, Cys56-Cys78, Cys61-Cys79, Cys67-Cys82, Cys90-Cys108, Cys102-Cys126, and Cys135-Cys168. In terms of domain architecture, Kazal-like spans 120 to 170 (EVPEPLCACRSQSPLCGSDGHTYSQICRLQEAARARPDANLTVAHPGPCES). Residues Asn159 and Asn183 are each glycosylated (N-linked (GlcNAc...) asparagine). An Ig-like C2-type domain is found at 172-269 (PQIVSHPYDT…GQVEAPASLT (98 aa)). A disulfide bridge links Cys193 with Cys253. N-linked (GlcNAc...) asparagine glycosylation is present at Asn277.

It is found in the secreted. The protein localises to the extracellular space. Its subcellular location is the extracellular matrix. Involved in the proliferation of osteoblasts during bone formation and bone regeneration. Promotes matrix assembly. In Homo sapiens (Human), this protein is Kazal-type serine protease inhibitor domain-containing protein 1 (KAZALD1).